We begin with the raw amino-acid sequence, 151 residues long: Small ribosomal subunit protein uS9 (151 aa).

Belongs to the universal ribosomal protein uS9 family.

The polypeptide is Small ribosomal subunit protein uS9 (RpS16) (Spodoptera frugiperda (Fall armyworm)).